The primary structure comprises 293 residues: 33 kDa chaperonin (293 aa).

Cystine bridges form between C237–C239 and C271–C274.

Belongs to the HSP33 family. Under oxidizing conditions two disulfide bonds are formed involving the reactive cysteines. Under reducing conditions zinc is bound to the reactive cysteines and the protein is inactive.

The protein localises to the cytoplasm. Redox regulated molecular chaperone. Protects both thermally unfolding and oxidatively damaged proteins from irreversible aggregation. Plays an important role in the bacterial defense system toward oxidative stress. The chain is 33 kDa chaperonin from Haemophilus influenzae (strain PittEE).